The sequence spans 512 residues: Glutathione-binding protein GsiB (512 aa).

An N-terminal signal peptide occupies residues 1–26 (MARAVHRSGLVALGIATALMASCAFA).

Belongs to the bacterial solute-binding protein 5 family. The complex is composed of two ATP-binding proteins (GsiA), two transmembrane proteins (GsiC and GsiD) and a solute-binding protein (GsiB).

The protein resides in the periplasm. In terms of biological role, part of the ABC transporter complex GsiABCD involved in glutathione import. Binds glutathione. The sequence is that of Glutathione-binding protein GsiB from Escherichia coli O1:K1 / APEC.